The chain runs to 348 residues: L-asparaginase 2 (348 aa).

A signal peptide spans 1 to 22 (MEFFKKTALAALVMGFSGAALA). The Asparaginase/glutaminase domain maps to 24-348 (PNITILATGG…QQIQQIFNQY (325 aa)). Catalysis depends on Thr34, which acts as the O-isoaspartyl threonine intermediate. Residues 80 to 81 (SQ) and 111 to 112 (TD) each bind substrate. Residues Cys99 and Cys127 are joined by a disulfide bond.

Belongs to the asparaginase 1 family. In terms of assembly, homotetramer.

The protein localises to the periplasm. The enzyme catalyses L-asparagine + H2O = L-aspartate + NH4(+). The protein is L-asparaginase 2 (ansB) of Escherichia coli (strain K12).